The chain runs to 121 residues: Type II secretion system protein I (121 aa).

The propeptide at 1 to 6 (MRRQKG) is leader sequence. At methionine 7 the chain carries N-methylmethionine. Residues 7–27 (MTLVEVLVALSVFALAGIAVL) traverse the membrane as a helical segment.

It belongs to the GSP I family. In terms of assembly, type II secretion is composed of four main components: the outer membrane complex, the inner membrane complex, the cytoplasmic secretion ATPase and the periplasm-spanning pseudopilus. Interacts with core component OutG. In terms of processing, cleaved by prepilin peptidase. Post-translationally, methylated by prepilin peptidase at the amino group of the N-terminal methionine once the leader sequence is cleaved by prepilin peptidase.

The protein resides in the cell inner membrane. Its function is as follows. Component of the type II secretion system required for the energy-dependent secretion of extracellular factors such as proteases and toxins from the periplasm. Part of the pseudopilus tip complex that is critical for the recognition and binding of secretion substrates. The polypeptide is Type II secretion system protein I (outI) (Pectobacterium carotovorum subsp. carotovorum (Erwinia carotovora subsp. carotovora)).